The following is a 766-amino-acid chain: MSKVTVQDIEAVDDYWGPTFRSILEGNNTKQIGDQLEQRIRSHDKEIERICNLYYQGFIDSIQELLQVRTQAQQLHNEVHSLDTSLRQISASLIQQGNDLVRARQIESNLASAIEALKSCLPALECYMKFTQQAKNKQYYQALRTLETLETEHLTRLKTHNYRFATQMQIQIPIIKENIRRSSASDFREFLENIRKFSPRIGELAITHTKQLQKRDINAIIAEHMQQMNGGEAGGAGAGGDDDGANVSAQDLIDFSPIYRCLHIYMVLGQREYFEKDYRQQRRDQAKLVLQPPPNMHDNLEAYKTYICAIVGFFVVEDHVKNTAGDVVTSSYLEDLWSSSLTKFVNEISMSSSSCTDPNILLRIKNLIMLSINTFKCYGYTVNILWELLHNMRDHYNEVLLQRWVHVFREILDKEQFLPMVVQNTEEYECIIERFPFHSEQLENAPFPKKFPFSRMVPEVYHQAKEFMYACMKFAEELTLSPNEVAAMVRKAANLLLTRSFSGCLSVVFRQPSITLTQLIQIIIDTQYLEKAGPFLDEFVCHMTNTERSVSQTPSAMFHVARQDAEKQVGLRICSKIDEFFELSAYDWLLVEPPGIASAFITDMISYLKSTFDSFAFKLPHIAQAACRRTFEHIAEKIYSIMYDEDVKQISTGALTQINLDLMQCEFFAASEPVPGLKEGELSKYFLRNRQLLDLLILEEWSTYFHDYGKQENRYHLVQPQSIIVILEKIREADKKPIFSLVRKNDKKKLLETVLKQLKHIADRQN.

Residues 28-90 (NTKQIGDQLE…SLDTSLRQIS (63 aa)) are a coiled coil.

Belongs to the SEC15 family. The exocyst complex is composed of Sec3/Exoc1, Sec5/Exoc2, Sec6/Exoc3, Sec8/Exoc4, Sec10/Exoc5, Sec15/Exoc6, Exo70/Exoc7 and Exo84/Exoc8. Interacts with RAB3, RAB8, RAB11 and RAB27. In terms of tissue distribution, detected in developing rhabdomeres in photoreceptor cells.

It localises to the cell projection. It is found in the rhabdomere. In terms of biological role, component of the exocyst complex involved in the docking of exocytic vesicles with fusion sites on the plasma membrane. This Drosophila melanogaster (Fruit fly) protein is Exocyst complex component 6.